A 2470-amino-acid chain; its full sequence is MSTTSVVQQFVNGLKSRNRNVQNKATQDLLFYVKTELREMSQEELAQFFDEFDHHIFTMVNATDINEKKGGALAMKCLINCEGSLTARKGISPYLNRLRDLLLINDVSVMEIAARSLVKLANMPTSKGADSFDFDIKKAFEVLRGERQEYRRHSAVFILRELAIALPTYFYQHILTFFEVIFNAIFDPKPAIRESAGEALRAALIVTAQRESTKQSSEPQWYRICYDEANGSFNADLGSSKDQKGVTRDDRIHGGLVVFNELFRCANATWERRYTSLKTLFPKTQHNKFLEASSSSSMGSQLNTLVPRLKVPFIDKLGSTQTHLGEGEHHKGVAKFASHNVLESAYAQEILQEHYTSICDNVLEQRTSKSPYVQQALLQILPRLAAFNRAVFVEKYLQTCVSHLMQILRGKEKDRTVAYITIGYMAVAVQSAIEVHLSSIMTSVKVALPSKDLTSKRKVPVDPAVFACITLLAHAVKSEIADDVKDILEQMFYTGLSPALTVCLRELSENVPQLKSAITEGLIGILSQVLMNKAAILPYTALPTIAIDGSLMQNGDGATTVLALKTLGTFNFEEQNMLDFVQRCADYFIVHEQQEIRLEAVQTCTRLLKLAVQSSESMENSKTLSDTVSHVIERLLMVAITDMDCNVRIRILRSLDETFDGKLAQPESLNSLFITLHDEIFEIRELAMVTIGRLSSINPAYVMPKLRTTMIELITDLKYSGMSRNKEQSAKMLDHLVISTPRLISSYMNPILKALVPKLHEPESNPGVILNVLRTIGDLAEVNGGSDEMELWADDLLSILLEMLGDAGSPDKRGVALWTLGQLISATGRVVTPYHKYPVLIDILINFLKTEQRRSIRRETIRVLGLLGAMDPYKHKMNKGLIDSQKDNVLIAYSDGKVDESQDISTAELLVNMGNALDEYYPAVAIAALMRILRDPTLSTRHTSVVQAVTFIFQSLGIKCVPYLAQVLPNLLDNVRTADNNLREFLFQQLAILVAFVKLHIISYMGDIFKLIKEFWTINTPLQNTLINLIEQIAVALGCEFRDYLAELIPQILRVLQHDNSKDRMVTRRLLQALQKFGSTLGYYLPLILPPIVKLFDSPYVPQQVSMVALETINNLACQLDFTDFSSRIIHPLVRVLDAEPELRDQAMTTLRSLAKQLGKKYLVFVPMVQRTLNKHRIVDPEYEELLSKIKSCSTLADSYGAGESELRPSRFKNNEPFVTDRNSNNKNLQVTTNELRTAWQVTRRVSKDDWVEWLKRLSIGLLKESPSHALRACRSLAQEYDTLLRDLFNAAFISCWTELSPDLKNELTQSLIQALQVTDMPEITQTILNLAEFMEHCDRDPIPIETKLLGTRAMACRAYAKALRYKEEEFLLREDSQVFESLILINNKLQQREAAEGLLTRYRNAANELNVQGRWYEKLHNWDEALEHYERNLKTDSSDLEARLGHMRCLEALGDWSELSNVTKHEWENFGTEAKSRAGPLAAVAAWGLQDWEAMREYVRCIPEDTQDGSYYRAVLAVHHDDFETAQRLIDETRDLLDTELTSMAGESYERAYGAMVCVQMLAELEEVIQYKLIPERREPLKTMWWKRLQGGQRLVEDWRRIIQVHSLVVKPHEDIHTWLKYASLCRKSGSLHLSHKTLVMLLGTDPKLNPNQPLPCNQPQVTYAYTKYMAANNQLQEAYEQLTHFVSTYSQELSCLPPEALKQQDQRLMARCYLRMATWQNKLQDSIRPDAIQGALECFEKATSYDPNWYKAWHLWAYMNFKVVQAQKSALDKQQPPGASMGMTMGSGLDSDLMIIQRYAVPAVQGFFRSISLIKGNSLQDTLRLLTLWFDYGNHAEVYEALLSGMKLIEINTWLQVIPQLIARIDTHRQLVGQLIHQLLMDIGKNHPQALVYPLTVASKSASLARRNAAFKILDSMRKHSPTLVEQAVMCSEELIRVAILWHEQWHEGLEEASRLYFGDRNVKGMFEILEPLHAMLERGPQTLKETSFSQAYGRELTEAYEWSQRYKTSAVVMDLDRAWDIYYHVFQKISRQLPQLTSLELPYVSPKLMTCKDLELAVPGSYNPGQELIRISIIKTNLQVITSKQRPRKLCIRGSNGKDYMYLLKGHEDLRQDERVMQLFSLVNTLLLDDPDTFRRNLAIQRYAVIPLSTNSGLIGWVPHCDTLHTLIRDYRDKKKVPLNQEHRTMLNFAPDYDHLTLMQKVEVFEHALGQTQGDDLAKLLWLKSPSSELWFERRNNYTRSLAVMSMVGYILGLGDRHPSNLMLDRMSGKILHIDFGDCFEVAMTREKFPEKIPFRLTRMLIKAMEVTGIEGTYRRTCESVMLVLRRNKDSLMAVLEAFVYDPLLNWRLLDVDKKGNDAVAGAGAPGGRGGSGMQDSLSNSVEDSLPMAKSKPYDPTLQQGGLHNNVADETNSKASQVIKRVKCKLTGTDFQTEKSVNEQSQVELLIQQATNNENLCQCYIGWCPFW.

HEAT repeat units follow at residues 172–209 (QHIL…VTAQ), 746–785 (SYMN…VNGG), 791–829 (LWAD…ATGR), 835–873 (HKYP…MDPY), 962–999 (PYLA…FVKL), 1043–1080 (DYLA…FGST), 1083–1122 (YYLP…QLDF), and 1124–1160 (DFSS…QLGK). One can recognise an FAT domain in the interval 1349-1903 (LLGTRAMACR…VYPLTVASKS (555 aa)). 2 TPR repeats span residues 1407-1440 (ANEL…DSSD) and 1718-1751 (MATW…DPNW). An HEAT 9 repeat occupies 1854 to 1891 (NTWLQVIPQLIARIDTHRQLVGQLIHQLLMDIGKNHPQ). One can recognise a PI3K/PI4K catalytic domain in the interval 2077 to 2389 (IKTNLQVITS…SLSNSVEDSL (313 aa)). The G-loop stretch occupies residues 2083–2089 (VITSKQR). The tract at residues 2256–2264 (GLGDRHPSN) is catalytic loop. Residues 2276–2301 (HIDFGDCFEVAMTREKFPEKIPFRLT) form an activation loop region. The disordered stretch occupies residues 2364–2389 (AGAGAPGGRGGSGMQDSLSNSVEDSL). A compositionally biased stretch (gly residues) spans 2367-2376 (GAPGGRGGSG). Over residues 2377–2386 (MQDSLSNSVE) the composition is skewed to polar residues. The region spanning 2438–2470 (KSVNEQSQVELLIQQATNNENLCQCYIGWCPFW) is the FATC domain.

The protein belongs to the PI3/PI4-kinase family. In terms of assembly, may be part of a minimal complex, TORC1, consisting of mTor, raptor and lst8. May be part of a minimal complex, TORC2, consisting of mTor, rictor and lst8. Self-associates; assembles into homomultimeric complexes. Component of a multiprotein complex.

It carries out the reaction L-seryl-[protein] + ATP = O-phospho-L-seryl-[protein] + ADP + H(+). The enzyme catalyses L-threonyl-[protein] + ATP = O-phospho-L-threonyl-[protein] + ADP + H(+). In terms of biological role, promotes cell and tissue growth, maintains tissue homeostatis and controls responses to environmental stress and aging. Regulates growth during animal development by coupling growth factor signaling to nutrient availability. Central regulators of autophagy. May be involved in atg1 phosphorylation. May also be involved, directly or indirectly, in the control of neuronal function. Phosphorylates S6K/p70S6K, in vitro. May regulate the activity of S6K. Overexpression inhibits growth and reduces cell size. Affects the timing of neuronal cell differentiation. Hyperactivation of the signaling leads to accelerated differentiation, whereas inhibition of the signaling retards differentiation. Thus, in addition to controlling growth of the cell in which it resides, it can also influence growth of distant cells and organs during development via a humoral mechanism. As part of the TORC1 complex regulates energy homeostasis and promotes certain aspects of larval growth by negatively regulating REPTOR. REPTOR functions downstream of TORC1 to regulate the expression of stress response genes in response to TORC1 inhibition resulting from nutrient deprivation. When TORC1 activity is high it phosphorylates REPTOR which inhibits its recruitment into the nucleus and antagonizes their function. This function is essential under normal feeding conditions to promote TORC1-dependent growth during larval development and, in adults and larvae to prevent the REPTOR-dependent expression of nutrient stress response genes. In short, during development, it primarily controls growth, whereas in the adult, where there is relatively little growth, it controls aging and other aspects of nutrient-related physiology. Rag GTPases act as activators of TORC1 in response to amino acid signals. The protein is Serine/threonine-protein kinase mTor of Drosophila melanogaster (Fruit fly).